Reading from the N-terminus, the 160-residue chain is MEIGVMQLCNMLIRLKGAVKQGAWHHLYLTTKLCSFIEPLWQTSPILGLEKDILLMVTKQLWKLMDLREEVTRRGCGGMSLETRENKEESITGKEVKNLITQILLLLIDVPGMRDTRFLNCPHSLLPLTSNAELLKHCLMAGKWSPKAEMIILAAERSEH.

Homodimer.

Its subcellular location is the host cytoplasm. This Human spumaretrovirus (SFVcpz(hu)) protein is Protein Bel-3 (bel3).